Reading from the N-terminus, the 1320-residue chain is Bifunctional protein PutA (1320 aa).

Residues 228 to 574 are proline dehydrogenase; it reads LSRSLNRIIG…SFVNRIADTS (347 aa). The tract at residues 653–1119 is aldehyde dehydrogenase; the sequence is QPVAAGEMSP…LANRPESALA (467 aa). Active-site residues include Glu-883 and Cys-917.

In the N-terminal section; belongs to the proline dehydrogenase family. This sequence in the C-terminal section; belongs to the aldehyde dehydrogenase family. As to quaternary structure, homodimer. FAD serves as cofactor.

It catalyses the reaction L-proline + a quinone = (S)-1-pyrroline-5-carboxylate + a quinol + H(+). The enzyme catalyses L-glutamate 5-semialdehyde + NAD(+) + H2O = L-glutamate + NADH + 2 H(+). It functions in the pathway amino-acid degradation; L-proline degradation into L-glutamate; L-glutamate from L-proline: step 1/2. It participates in amino-acid degradation; L-proline degradation into L-glutamate; L-glutamate from L-proline: step 2/2. Oxidizes proline to glutamate for use as a carbon and nitrogen source and also function as a transcriptional repressor of the put operon. This Escherichia coli (strain K12) protein is Bifunctional protein PutA (putA).